A 360-amino-acid polypeptide reads, in one-letter code: UDP-3-O-acylglucosamine N-acyltransferase (360 aa).

His253 acts as the Proton acceptor in catalysis.

This sequence belongs to the transferase hexapeptide repeat family. LpxD subfamily. As to quaternary structure, homotrimer.

The enzyme catalyses a UDP-3-O-[(3R)-3-hydroxyacyl]-alpha-D-glucosamine + a (3R)-hydroxyacyl-[ACP] = a UDP-2-N,3-O-bis[(3R)-3-hydroxyacyl]-alpha-D-glucosamine + holo-[ACP] + H(+). The protein operates within bacterial outer membrane biogenesis; LPS lipid A biosynthesis. Its function is as follows. Catalyzes the N-acylation of UDP-3-O-acylglucosamine using 3-hydroxyacyl-ACP as the acyl donor. Is involved in the biosynthesis of lipid A, a phosphorylated glycolipid that anchors the lipopolysaccharide to the outer membrane of the cell. In Burkholderia multivorans (strain ATCC 17616 / 249), this protein is UDP-3-O-acylglucosamine N-acyltransferase.